We begin with the raw amino-acid sequence, 434 residues long: Trigger factor (434 aa).

The PPIase FKBP-type domain occupies G160–P245.

The protein belongs to the FKBP-type PPIase family. Tig subfamily.

Its subcellular location is the cytoplasm. It catalyses the reaction [protein]-peptidylproline (omega=180) = [protein]-peptidylproline (omega=0). Functionally, involved in protein export. Acts as a chaperone by maintaining the newly synthesized protein in an open conformation. Functions as a peptidyl-prolyl cis-trans isomerase. The polypeptide is Trigger factor (Shewanella baltica (strain OS223)).